The primary structure comprises 461 residues: Photosystem II CP43 reaction center protein (461 aa).

A propeptide spanning residues 1–2 (ME) is cleaved from the precursor. Threonine 3 is subject to N-acetylthreonine. At threonine 3 the chain carries Phosphothreonine. 5 helical membrane-spanning segments follow: residues 57 to 81 (LFEV…PHIA), 122 to 143 (LIGP…KDKN), 166 to 188 (KAMY…RIIS), 243 to 263 (KPWG…LSYS), and 279 to 300 (WFNN…ASQA). [CaMn4O5] cluster is bound at residue glutamate 355. The helical transmembrane segment at 435-459 (RARAAAAGFEKGIDRDTEPVLSMKP) threads the bilayer.

Belongs to the PsbB/PsbC family. PsbC subfamily. In terms of assembly, PSII is composed of 1 copy each of membrane proteins PsbA, PsbB, PsbC, PsbD, PsbE, PsbF, PsbH, PsbI, PsbJ, PsbK, PsbL, PsbM, PsbT, PsbX, PsbY, PsbZ, Psb30/Ycf12, at least 3 peripheral proteins of the oxygen-evolving complex and a large number of cofactors. It forms dimeric complexes. Requires Binds multiple chlorophylls and provides some of the ligands for the Ca-4Mn-5O cluster of the oxygen-evolving complex. It may also provide a ligand for a Cl- that is required for oxygen evolution. PSII binds additional chlorophylls, carotenoids and specific lipids. as cofactor.

The protein localises to the plastid. Its subcellular location is the chloroplast thylakoid membrane. Functionally, one of the components of the core complex of photosystem II (PSII). It binds chlorophyll and helps catalyze the primary light-induced photochemical processes of PSII. PSII is a light-driven water:plastoquinone oxidoreductase, using light energy to abstract electrons from H(2)O, generating O(2) and a proton gradient subsequently used for ATP formation. In Oltmannsiellopsis viridis (Marine flagellate), this protein is Photosystem II CP43 reaction center protein.